The sequence spans 562 residues: Protein FAM83D-A (562 aa).

Residues 424-471 (ITTQTTETSQCTTQTPAPTSSVARLSNSSNSSSSSFSSTSITSTGSNC) form a disordered region. The segment covering 425 to 471 (TTQTTETSQCTTQTPAPTSSVARLSNSSNSSSSSFSSTSITSTGSNC) has biased composition (low complexity).

Belongs to the FAM83 family.

It is found in the cytoplasm. The protein resides in the cytoskeleton. Its subcellular location is the spindle. It localises to the spindle pole. In terms of biological role, may regulate cell proliferation, growth, migration and epithelial to mesenchymal transition. May also be important for proper chromosome congression and alignment during mitosis. This chain is Protein FAM83D-A, found in Xenopus laevis (African clawed frog).